We begin with the raw amino-acid sequence, 255 residues long: Ribonuclease HII (255 aa).

The 186-residue stretch at 70–255 (DLVAGIDEVG…FEPVPEFLIK (186 aa)) folds into the RNase H type-2 domain. The a divalent metal cation site is built by D76, E77, and D168.

It belongs to the RNase HII family. Mn(2+) serves as cofactor. Mg(2+) is required as a cofactor.

Its subcellular location is the cytoplasm. The catalysed reaction is Endonucleolytic cleavage to 5'-phosphomonoester.. Its function is as follows. Endonuclease that specifically degrades the RNA of RNA-DNA hybrids. The polypeptide is Ribonuclease HII (Pediococcus pentosaceus (strain ATCC 25745 / CCUG 21536 / LMG 10740 / 183-1w)).